The following is a 366-amino-acid chain: Aminomethyltransferase (366 aa).

The protein belongs to the GcvT family. The glycine cleavage system is composed of four proteins: P, T, L and H.

It catalyses the reaction N(6)-[(R)-S(8)-aminomethyldihydrolipoyl]-L-lysyl-[protein] + (6S)-5,6,7,8-tetrahydrofolate = N(6)-[(R)-dihydrolipoyl]-L-lysyl-[protein] + (6R)-5,10-methylene-5,6,7,8-tetrahydrofolate + NH4(+). Its function is as follows. The glycine cleavage system catalyzes the degradation of glycine. In Bordetella petrii (strain ATCC BAA-461 / DSM 12804 / CCUG 43448), this protein is Aminomethyltransferase.